The primary structure comprises 86 residues: Large ribosomal subunit protein bL27 (86 aa).

The segment at 1 to 24 is disordered; the sequence is MAHKKAGGSSRNGRDSEGRRLGVK.

Belongs to the bacterial ribosomal protein bL27 family.

The chain is Large ribosomal subunit protein bL27 from Magnetococcus marinus (strain ATCC BAA-1437 / JCM 17883 / MC-1).